Reading from the N-terminus, the 552-residue chain is Glutamine--tRNA ligase (552 aa).

A 'HIGH' region motif is present at residues 34-44; that stretch reads PEPNGYLHIGH. Residues 35 to 37 and 41 to 47 each bind ATP; these read EPN and HIGHAKS. L-glutamine contacts are provided by Asp-67 and Tyr-212. ATP is bound by residues Thr-231, 261 to 262, and 269 to 271; these read RL and MSK. Residues 268–272 carry the 'KMSKS' region motif; that stretch reads IMSKR.

The protein belongs to the class-I aminoacyl-tRNA synthetase family. In terms of assembly, monomer.

The protein resides in the cytoplasm. The enzyme catalyses tRNA(Gln) + L-glutamine + ATP = L-glutaminyl-tRNA(Gln) + AMP + diphosphate. This is Glutamine--tRNA ligase from Pectobacterium atrosepticum (strain SCRI 1043 / ATCC BAA-672) (Erwinia carotovora subsp. atroseptica).